A 610-amino-acid polypeptide reads, in one-letter code: UvrABC system protein C (610 aa).

The 79-residue stretch at 16-94 (SQPGVYRMYD…IKLYQPRYNV (79 aa)) folds into the GIY-YIG domain. Residues 204–239 (DQVLTQLIARMEKASQDLAFEEAARIRDQIQAVRRV) enclose the UVR domain.

The protein belongs to the UvrC family. As to quaternary structure, interacts with UvrB in an incision complex.

It localises to the cytoplasm. Its function is as follows. The UvrABC repair system catalyzes the recognition and processing of DNA lesions. UvrC both incises the 5' and 3' sides of the lesion. The N-terminal half is responsible for the 3' incision and the C-terminal half is responsible for the 5' incision. The protein is UvrABC system protein C of Salmonella typhimurium (strain LT2 / SGSC1412 / ATCC 700720).